Reading from the N-terminus, the 185-residue chain is Ribosome-recycling factor (185 aa).

The protein belongs to the RRF family.

Its subcellular location is the cytoplasm. Its function is as follows. Responsible for the release of ribosomes from messenger RNA at the termination of protein biosynthesis. May increase the efficiency of translation by recycling ribosomes from one round of translation to another. The sequence is that of Ribosome-recycling factor from Streptococcus suis (strain 98HAH33).